Here is a 389-residue protein sequence, read N- to C-terminus: Cytochrome b (389 aa).

A run of 8 helical transmembrane segments spans residues 32-52 (FGFFSLICLIIQLVSGILLAM), 76-98 (WLLRYIHANGASFFFIVVYIHML), 113-133 (LWVSGVVIFLLLIITGFLGYV), 179-199 (FFSLHYLCPFIIVGLVGLHII), 225-245 (FTIKDLFSFMIFLVLFFTFVF), 290-310 (LGVLALVLAIVVLAFLPFLTI), 325-345 (LFWSFLALCFFLGFLGSQPAA), and 353-373 (LYSTIAYFIYILVLFPCIYIV). Residues H82 and H96 each coordinate heme b. The heme b site is built by H183 and H197.

This sequence belongs to the cytochrome b family. In terms of assembly, the main subunits of complex b-c1 are: cytochrome b, cytochrome c1 and the Rieske protein. Heme b serves as cofactor.

The protein localises to the mitochondrion inner membrane. Its function is as follows. Component of the ubiquinol-cytochrome c reductase complex (complex III or cytochrome b-c1 complex) that is part of the mitochondrial respiratory chain. The b-c1 complex mediates electron transfer from ubiquinol to cytochrome c. Contributes to the generation of a proton gradient across the mitochondrial membrane that is then used for ATP synthesis. The chain is Cytochrome b (cytB) from Dictyostelium discoideum (Social amoeba).